We begin with the raw amino-acid sequence, 865 residues long: Prominin-1 (865 aa).

An N-terminal signal peptide occupies residues 1-19; it reads MALVLGSLLLLGLCGNSFS. Topologically, residues 20-108 are extracellular; the sequence is GGQPSSTDAP…GLKIVYYEAG (89 aa). A helical transmembrane segment spans residues 109 to 129; that stretch reads IILCCVLGLLFIILMPLVGYF. Residues 130–157 are Cytoplasmic-facing; the sequence is FCMCRCCNKCGGEMHQRQKENGPFLRKC. Residues 158–178 traverse the membrane as a helical segment; sequence FAISLLVICIIISIGIFYGFV. Topologically, residues 179–433 are extracellular; sequence ANHQVRTRIK…LPTLEEYDSY (255 aa). The N-linked (GlcNAc...) asparagine glycan is linked to Asn-220. 3 positions are modified to N6-acetyllysine: Lys-225, Lys-257, and Lys-264. N-linked (GlcNAc...) asparagine glycosylation is found at Asn-274, Asn-395, and Asn-414. Residues 434-454 form a helical membrane-spanning segment; that stretch reads WWLGGLVICSLLTLIVIFYYL. The Cytoplasmic segment spans residues 455-486; that stretch reads GLLCGVCGYDRHATPTTRGCVSNTGGVFLMVG. The helical transmembrane segment at 487–507 threads the bilayer; it reads VGLSFLFCWILMIIVVLTFVF. Topologically, residues 508–792 are extracellular; sequence GANVEKLICE…LCSYIIDPLN (285 aa). 4 N-linked (GlcNAc...) asparagine glycosylation sites follow: Asn-548, Asn-580, Asn-729, and Asn-730. Residues 793 to 813 traverse the membrane as a helical segment; the sequence is LFWFGIGKATVFLLPALIFAV. The Cytoplasmic portion of the chain corresponds to 814–865; it reads KLAKYYRRMDSEDVYDDVETIPMKNMENGNNGYHKDHVYGIHNPVMTSPSQH. Ser-863 carries the phosphoserine modification.

The protein belongs to the prominin family. Interacts with CDHR1 and with actin filaments. Interacts with NAT8 and NAT8B. In terms of processing, isoform 1 and isoform 2 are glycosylated. Post-translationally, acetylation at Lys-225, Lys-257 and Lys-264 by NAT8 and NAT8B may control PROM1 protein expression and its function in cell apoptosis. In terms of tissue distribution, isoform 1 is selectively expressed on CD34 hematopoietic stem and progenitor cells in adult and fetal bone marrow, fetal liver, cord blood and adult peripheral blood. Isoform 1 is not detected on other blood cells. Isoform 1 is also expressed in a number of non-lymphoid tissues including retina, pancreas, placenta, kidney, liver, lung, brain and heart. Found in saliva within small membrane particles. Isoform 2 is predominantly expressed in fetal liver, skeletal muscle, kidney, and heart as well as adult pancreas, kidney, liver, lung, and placenta. Isoform 2 is highly expressed in fetal liver, low in bone marrow, and barely detectable in peripheral blood. Isoform 2 is expressed on hematopoietic stem cells and in epidermal basal cells (at protein level). Expressed in adult retina by rod and cone photoreceptor cells (at protein level).

The protein resides in the apical cell membrane. It localises to the cell projection. Its subcellular location is the microvillus membrane. It is found in the cilium. The protein localises to the photoreceptor outer segment. The protein resides in the endoplasmic reticulum. It localises to the endoplasmic reticulum-Golgi intermediate compartment. Functionally, may play a role in cell differentiation, proliferation and apoptosis. Binds cholesterol in cholesterol-containing plasma membrane microdomains and may play a role in the organization of the apical plasma membrane in epithelial cells. During early retinal development acts as a key regulator of disk morphogenesis. Involved in regulation of MAPK and Akt signaling pathways. In neuroblastoma cells suppresses cell differentiation such as neurite outgrowth in a RET-dependent manner. The chain is Prominin-1 (PROM1) from Homo sapiens (Human).